The sequence spans 612 residues: Chaperone protein DnaK (612 aa).

At threonine 173 the chain carries Phosphothreonine; by autocatalysis. A disordered region spans residues 576–612 (AAKAQQAEGGANAEGKKADDNVVDAEYEEVKDDETKK). Low complexity predominate over residues 578 to 588 (KAQQAEGGANA). Residues 596-612 (NVVDAEYEEVKDDETKK) show a composition bias toward acidic residues.

The protein belongs to the heat shock protein 70 family.

Its function is as follows. Acts as a chaperone. This is Chaperone protein DnaK from Bacillus velezensis (strain DSM 23117 / BGSC 10A6 / LMG 26770 / FZB42) (Bacillus amyloliquefaciens subsp. plantarum).